Consider the following 93-residue polypeptide: Large ribosomal subunit protein uL23cy (93 aa).

Belongs to the universal ribosomal protein uL23 family. Part of the 50S ribosomal subunit.

The protein resides in the plastid. The protein localises to the chloroplast. Binds to 23S rRNA. The polypeptide is Large ribosomal subunit protein uL23cy (rpl23-B) (Sorghum bicolor (Sorghum)).